We begin with the raw amino-acid sequence, 476 residues long: Chromosomal replication initiator protein DnaA (476 aa).

Residues 1–73 (MTNSEQERWS…LSAWQAEMPE (73 aa)) form a domain I, interacts with DnaA modulators region. The interval 73–132 (EVHRIDLSVRTAMRCATPAKEAPAAVEARRPERSDAKPVSDARAPVMTPVAASHDALGGS) is domain II. The interval 92 to 115 (KEAPAAVEARRPERSDAKPVSDAR) is disordered. Residues 99-112 (EARRPERSDAKPVS) are compositionally biased toward basic and acidic residues. The segment at 133–355 (PLDPRLTFAS…GAINRLLAHS (223 aa)) is domain III, AAA+ region. ATP is bound by residues Gly180, Gly182, Lys183, and Thr184. The segment at 356–476 (KLNNQPVTLD…VESLKRQLQD (121 aa)) is domain IV, binds dsDNA.

The protein belongs to the DnaA family. Oligomerizes as a right-handed, spiral filament on DNA at oriC.

It is found in the cytoplasm. In terms of biological role, plays an essential role in the initiation and regulation of chromosomal replication. ATP-DnaA binds to the origin of replication (oriC) to initiate formation of the DNA replication initiation complex once per cell cycle. Binds the DnaA box (a 9 base pair repeat at the origin) and separates the double-stranded (ds)DNA. Forms a right-handed helical filament on oriC DNA; dsDNA binds to the exterior of the filament while single-stranded (ss)DNA is stabiized in the filament's interior. The ATP-DnaA-oriC complex binds and stabilizes one strand of the AT-rich DNA unwinding element (DUE), permitting loading of DNA polymerase. After initiation quickly degrades to an ADP-DnaA complex that is not apt for DNA replication. Binds acidic phospholipids. In Bradyrhizobium sp. (strain ORS 278), this protein is Chromosomal replication initiator protein DnaA.